Here is a 517-residue protein sequence, read N- to C-terminus: Arp2/3 complex-activating protein rickA (517 aa).

Disordered regions lie at residues Leu313–Ala441 and Lys461–Arg517. 2 stretches are compositionally biased toward pro residues: residues Pro319–Leu340 and Ser347–Ala378. In terms of domain architecture, WH2 spans Asp406 to Val423. The central and acidic domains stretch occupies residues Val444–Asp477. Low complexity predominate over residues Ser463–Ser479. Residues Thr500–Arg517 show a composition bias toward polar residues.

Homodimer.

Its subcellular location is the cell surface. In terms of biological role, recruits and activates the Arp2/3 complex, which in turn leads to actin polymerization, promoting Rickettsia motility during infection. This Rickettsia conorii (strain ATCC VR-613 / Malish 7) protein is Arp2/3 complex-activating protein rickA (rickA).